The primary structure comprises 141 residues: Large ribosomal subunit protein bL17 (141 aa).

The protein belongs to the bacterial ribosomal protein bL17 family. As to quaternary structure, part of the 50S ribosomal subunit. Contacts protein L32.

The polypeptide is Large ribosomal subunit protein bL17 (Sinorhizobium fredii (strain NBRC 101917 / NGR234)).